We begin with the raw amino-acid sequence, 299 residues long: Taste receptor type 2 member 50 (299 aa).

Position 1 (Met-1) is a topological domain, extracellular. A helical membrane pass occupies residues 2-22 (IPFLHIFFSVLILVLFVLGNF). The Cytoplasmic portion of the chain corresponds to 23 to 55 (ANGFIALVNFIDWVKRKKISLADQILTALAVSR). A helical membrane pass occupies residues 56–76 (VGLLWALLLNWYLTELNPAFY). At 77–87 (SVELRITSYNA) the chain is on the extracellular side. Residues 88 to 108 (WVVTNHFSMWLAASLSIFYLL) traverse the membrane as a helical segment. The Cytoplasmic segment spans residues 109–126 (KIANFSNLSFLNLKRRVR). Residues 127–147 (SIILVILLGSLLFLVCHLLAV) form a helical membrane-spanning segment. Residues 148–181 (NMDENMWTEEYEGNMTGKMKLRNAAHLSYMTVTT) lie on the Extracellular side of the membrane. N-linked (GlcNAc...) asparagine glycosylation is present at Asn-161. A helical transmembrane segment spans residues 182-202 (LWSFIPFMLSLISFLMLIFSL). The Cytoplasmic portion of the chain corresponds to 203 to 229 (CKHLKKMQLHGEGSRDPSTTVHIKALQ). A helical membrane pass occupies residues 230–250 (TLISFLLLCAIFFLFLIISVW). At 251-259 (SPRRLQNEP) the chain is on the extracellular side. Residues 260–280 (VFMVCKAVGNIYLSFDSFVLI) traverse the membrane as a helical segment. The Cytoplasmic segment spans residues 281-299 (WRTKKLKHIFLLILCQIRC).

Belongs to the G-protein coupled receptor T2R family.

The protein resides in the membrane. Receptor that may play a role in the perception of bitterness and is gustducin-linked. May play a role in sensing the chemical composition of the gastrointestinal content. The activity of this receptor may stimulate alpha gustducin, mediate PLC-beta-2 activation and lead to the gating of TRPM5. This chain is Taste receptor type 2 member 50 (TAS2R50), found in Macaca mulatta (Rhesus macaque).